Reading from the N-terminus, the 484-residue chain is Glycogen synthase (484 aa).

An ADP-alpha-D-glucose-binding site is contributed by Lys-15.

Belongs to the glycosyltransferase 1 family. Bacterial/plant glycogen synthase subfamily.

It carries out the reaction [(1-&gt;4)-alpha-D-glucosyl](n) + ADP-alpha-D-glucose = [(1-&gt;4)-alpha-D-glucosyl](n+1) + ADP + H(+). It participates in glycan biosynthesis; glycogen biosynthesis. Functionally, synthesizes alpha-1,4-glucan chains using ADP-glucose. This chain is Glycogen synthase, found in Geotalea daltonii (strain DSM 22248 / JCM 15807 / FRC-32) (Geobacter daltonii).